Consider the following 335-residue polypeptide: Histidinol-phosphatase (335 aa).

Belongs to the PHP hydrolase family. HisK subfamily.

It catalyses the reaction L-histidinol phosphate + H2O = L-histidinol + phosphate. Its pathway is amino-acid biosynthesis; L-histidine biosynthesis; L-histidine from 5-phospho-alpha-D-ribose 1-diphosphate: step 8/9. The polypeptide is Histidinol-phosphatase (HIS2) (Saccharomyces cerevisiae (strain ATCC 204508 / S288c) (Baker's yeast)).